Here is a 446-residue protein sequence, read N- to C-terminus: Putative diacyglycerol O-acyltransferase Rv3371 (446 aa).

Histidine 129 (proton acceptor) is an active-site residue. The interval 425–446 (SRALPSAARRGRPSVPTARARH) is disordered.

This sequence belongs to the long-chain O-acyltransferase family.

It carries out the reaction an acyl-CoA + a 1,2-diacyl-sn-glycerol = a triacyl-sn-glycerol + CoA. It catalyses the reaction di-(9Z)-octadecenoylglycerol + (9Z)-octadecenoyl-CoA = 1,2,3-tri-(9Z-octadecenoyl)-glycerol + CoA. Its pathway is glycerolipid metabolism; triacylglycerol biosynthesis. In terms of biological role, catalyzes the terminal and only committed step in triacylglycerol synthesis by using diacylglycerol and fatty acyl CoA as substrates. Required for storage lipid synthesis. Upon expression in E.coli functions weakly as a triacylglycerol synthase, making triacylglycerol (TG) from diolein and long-chain fatty acyl-CoA. Has no wax synthase activity to produce wax esters. This is Putative diacyglycerol O-acyltransferase Rv3371 from Mycobacterium tuberculosis (strain ATCC 25618 / H37Rv).